The primary structure comprises 305 residues: MRQFKRAYAKSLADNSNDTNSNGVTPLQYAIKTHNDYKIRKILKKYKTWKNIMEDLQYPLDIPEFDDPTKYFTEIASNSETETFKMILELDPEITDDNIKHFMINCRGNNCMEKFDMLHKHPSVKDKIGLFNSRNNVGSYIIFHARFDIDKIKNFEKRFGKIKIDNEMINVLTGPGYYWGGGSCQKNFEIIQDLENNFEVDYSRLNIGECECSNVLDFIINRRDISEIIDQDNSRNPTDRIIFKKKYDLLWEEKHRYTGSKKRIKEREKCIDILLDKGFADAKTSSVIRYYNNLHNGYQYGPYMD.

This is an uncharacterized protein from Acanthamoeba polyphaga mimivirus (APMV).